The primary structure comprises 172 residues: FMN reductase (NADH) RutF 2 (172 aa).

Belongs to the non-flavoprotein flavin reductase family. RutF subfamily.

It catalyses the reaction FMNH2 + NAD(+) = FMN + NADH + 2 H(+). Catalyzes the reduction of FMN to FMNH2 which is used to reduce pyrimidine by RutA via the Rut pathway. In Methylorubrum extorquens (strain PA1) (Methylobacterium extorquens), this protein is FMN reductase (NADH) RutF 2.